We begin with the raw amino-acid sequence, 473 residues long: 3-isopropylmalate dehydratase large subunit 2 (473 aa).

3 residues coordinate [4Fe-4S] cluster: Cys350, Cys410, and Cys413.

It belongs to the aconitase/IPM isomerase family. LeuC type 1 subfamily. In terms of assembly, heterodimer of LeuC and LeuD. [4Fe-4S] cluster serves as cofactor.

It carries out the reaction (2R,3S)-3-isopropylmalate = (2S)-2-isopropylmalate. Its pathway is amino-acid biosynthesis; L-leucine biosynthesis; L-leucine from 3-methyl-2-oxobutanoate: step 2/4. Catalyzes the isomerization between 2-isopropylmalate and 3-isopropylmalate, via the formation of 2-isopropylmaleate. This chain is 3-isopropylmalate dehydratase large subunit 2, found in Salmonella typhimurium (strain LT2 / SGSC1412 / ATCC 700720).